A 113-amino-acid polypeptide reads, in one-letter code: Integration host factor subunit alpha (113 aa).

The disordered stretch occupies residues 59–80; the sequence is GNFQVRDKPPRPGRNPKTGETI.

It belongs to the bacterial histone-like protein family. Heterodimer of an alpha and a beta chain.

In terms of biological role, this protein is one of the two subunits of integration host factor, a specific DNA-binding protein that functions in genetic recombination as well as in transcriptional and translational control. The sequence is that of Integration host factor subunit alpha from Bordetella bronchiseptica (strain ATCC BAA-588 / NCTC 13252 / RB50) (Alcaligenes bronchisepticus).